Reading from the N-terminus, the 1368-residue chain is DNA-directed RNA polymerase subunit beta (1368 aa).

Belongs to the RNA polymerase beta chain family. As to quaternary structure, the RNAP catalytic core consists of 2 alpha, 1 beta, 1 beta' and 1 omega subunit. When a sigma factor is associated with the core the holoenzyme is formed, which can initiate transcription.

The enzyme catalyses RNA(n) + a ribonucleoside 5'-triphosphate = RNA(n+1) + diphosphate. Its function is as follows. DNA-dependent RNA polymerase catalyzes the transcription of DNA into RNA using the four ribonucleoside triphosphates as substrates. The chain is DNA-directed RNA polymerase subunit beta from Burkholderia ambifaria (strain ATCC BAA-244 / DSM 16087 / CCUG 44356 / LMG 19182 / AMMD) (Burkholderia cepacia (strain AMMD)).